We begin with the raw amino-acid sequence, 92 residues long: UPF0213 protein MGAS9429_Spy1198 (92 aa).

The region spanning 4–80 (KKAYMYVLEC…KRKTRSQKLA (77 aa)) is the GIY-YIG domain.

Belongs to the UPF0213 family.

The sequence is that of UPF0213 protein MGAS9429_Spy1198 from Streptococcus pyogenes serotype M12 (strain MGAS9429).